Reading from the N-terminus, the 892-residue chain is DNA mismatch repair protein MutS (892 aa).

607 to 614 (GPNMSGKS) contacts ATP.

This sequence belongs to the DNA mismatch repair MutS family.

This protein is involved in the repair of mismatches in DNA. It is possible that it carries out the mismatch recognition step. This protein has a weak ATPase activity. The protein is DNA mismatch repair protein MutS of Bacillus cereus (strain G9842).